The following is a 339-amino-acid chain: Methionine import ATP-binding protein MetN 2 (339 aa).

An ABC transporter domain is found at 2–241 (ISFNNVSKVY…PKTTTTQNFV (240 aa)). Residue 38 to 45 (GFSGAGKS) participates in ATP binding.

It belongs to the ABC transporter superfamily. Methionine importer (TC 3.A.1.24) family. In terms of assembly, the complex is composed of two ATP-binding proteins (MetN), two transmembrane proteins (MetI) and a solute-binding protein (MetQ).

It is found in the cell membrane. It catalyses the reaction L-methionine(out) + ATP + H2O = L-methionine(in) + ADP + phosphate + H(+). It carries out the reaction D-methionine(out) + ATP + H2O = D-methionine(in) + ADP + phosphate + H(+). Functionally, part of the ABC transporter complex MetNIQ involved in methionine import. Responsible for energy coupling to the transport system. The protein is Methionine import ATP-binding protein MetN 2 of Bacillus anthracis.